Consider the following 202-residue polypeptide: Putative scarecrow-like protein 16 (202 aa).

The interval 1 to 26 (MQIPTLIDSMANKLHKKPPPLLKLTV) is VHIID. A GRAS domain is found at 1-202 (MQIPTLIDSM…RVERLEPKSR (202 aa)). The tract at residues 45–82 (ELGSKLVNFATTRNVAMEFRIISSSYSDGLSSLIEQLR) is leucine repeat II (LRII). Residues 92-184 (LVVNCHMMLH…EADISWKIDN (93 aa)) form a PFYRE region. Residues 187–202 (AKEGAERVERLEPKSR) are SAW.

Belongs to the GRAS family. In terms of tissue distribution, expressed in seedlings, leaves and flowers.

It localises to the nucleus. Functionally, probable transcription factor involved in plant development. This is Putative scarecrow-like protein 16 (SCL16) from Arabidopsis thaliana (Mouse-ear cress).